The following is a 473-amino-acid chain: Maltose fermentation regulatory protein MAL63 (473 aa).

A DNA-binding region (zn(2)-C6 fungal-type) is located at residues 8–34 (CDCCRVRRVKCDRNKPCNRCIQRNLNC). Positions 41–49 (KKRGPKSIR) match the Nuclear localization signal motif.

Belongs to the MAL13 family.

It is found in the nucleus. Regulates the coordinate transcription of structural MAL6S (maltase) and MAL6T (maltose permease) genes. This is Maltose fermentation regulatory protein MAL63 (MAL63) from Saccharomyces cerevisiae (Baker's yeast).